The following is a 301-amino-acid chain: Lysozyme-like protein 3 (301 aa).

The signal sequence occupies residues 1–15 (MKLFALLVSITLCYS). One can recognise a Ch-type lysozyme domain in the interval 64-282 (HAYSVDISFH…HLSQIVHFST (219 aa)).

It belongs to the glycosyl hydrolase 25 family.

In terms of biological role, plays a role in the stress response to heavy metals such as copper, probably in a kgb-1-dependent manner. The sequence is that of Lysozyme-like protein 3 from Caenorhabditis elegans.